Consider the following 642-residue polypeptide: Chaperone protein HtpG (642 aa).

Residues 1-350 are a; substrate-binding; the sequence is MATDTQKETL…SNDLSLNVSR (350 aa). The b stretch occupies residues 351-567; the sequence is EILQNDHAVD…EYDMGLQMRR (217 aa). The segment at 568–642 is c; it reads LLEQAGQKLP…MNKLIVQLSK (75 aa).

The protein belongs to the heat shock protein 90 family. As to quaternary structure, homodimer.

Its subcellular location is the cytoplasm. Functionally, molecular chaperone. Has ATPase activity. The sequence is that of Chaperone protein HtpG from Marinomonas sp. (strain MWYL1).